The primary structure comprises 437 residues: GTPase Obg (437 aa).

Positions 2–160 (SMFLDTAKIK…RNLELELKVL (159 aa)) constitute an Obg domain. An OBG-type G domain is found at 161-338 (ADVGLVGFPS…LLEATAELLE (178 aa)). GTP is bound by residues 167 to 174 (GFPSVGKS), 192 to 196 (FTTIV), 214 to 217 (DLPG), 284 to 287 (NKMD), and 319 to 321 (SGI). The Mg(2+) site is built by Ser-174 and Thr-194. One can recognise an OCT domain in the interval 359-437 (GFNPDEPEFA…IGKFEFEFVD (79 aa)).

Belongs to the TRAFAC class OBG-HflX-like GTPase superfamily. OBG GTPase family. Monomer. Requires Mg(2+) as cofactor.

It localises to the cytoplasm. Its function is as follows. An essential GTPase which binds GTP, GDP and possibly (p)ppGpp with moderate affinity, with high nucleotide exchange rates and a fairly low GTP hydrolysis rate. Plays a role in control of the cell cycle, stress response, ribosome biogenesis and in those bacteria that undergo differentiation, in morphogenesis control. The protein is GTPase Obg of Streptococcus suis (strain 98HAH33).